A 201-amino-acid polypeptide reads, in one-letter code: Dephospho-CoA kinase (201 aa).

In terms of domain architecture, DPCK spans 4–201 (AFFVTASIAC…VIQEISKGNM (198 aa)). 12 to 17 (ACGKST) serves as a coordination point for ATP.

The protein belongs to the CoaE family.

It is found in the cytoplasm. It catalyses the reaction 3'-dephospho-CoA + ATP = ADP + CoA + H(+). Its pathway is cofactor biosynthesis; coenzyme A biosynthesis; CoA from (R)-pantothenate: step 5/5. Its function is as follows. Catalyzes the phosphorylation of the 3'-hydroxyl group of dephosphocoenzyme A to form coenzyme A. The sequence is that of Dephospho-CoA kinase from Campylobacter jejuni subsp. jejuni serotype O:2 (strain ATCC 700819 / NCTC 11168).